The sequence spans 314 residues: Acetylglutamate kinase (314 aa).

Substrate-binding positions include 76–77 (GG), arginine 98, and asparagine 199.

The protein belongs to the acetylglutamate kinase family. ArgB subfamily.

The protein localises to the cytoplasm. It carries out the reaction N-acetyl-L-glutamate + ATP = N-acetyl-L-glutamyl 5-phosphate + ADP. The protein operates within amino-acid biosynthesis; L-arginine biosynthesis; N(2)-acetyl-L-ornithine from L-glutamate: step 2/4. Functionally, catalyzes the ATP-dependent phosphorylation of N-acetyl-L-glutamate. The protein is Acetylglutamate kinase of Bifidobacterium longum (strain DJO10A).